Here is a 576-residue protein sequence, read N- to C-terminus: Proline--tRNA ligase (576 aa).

This sequence belongs to the class-II aminoacyl-tRNA synthetase family. ProS type 1 subfamily. As to quaternary structure, homodimer.

The protein resides in the cytoplasm. The enzyme catalyses tRNA(Pro) + L-proline + ATP = L-prolyl-tRNA(Pro) + AMP + diphosphate. Its function is as follows. Catalyzes the attachment of proline to tRNA(Pro) in a two-step reaction: proline is first activated by ATP to form Pro-AMP and then transferred to the acceptor end of tRNA(Pro). As ProRS can inadvertently accommodate and process non-cognate amino acids such as alanine and cysteine, to avoid such errors it has two additional distinct editing activities against alanine. One activity is designated as 'pretransfer' editing and involves the tRNA(Pro)-independent hydrolysis of activated Ala-AMP. The other activity is designated 'posttransfer' editing and involves deacylation of mischarged Ala-tRNA(Pro). The misacylated Cys-tRNA(Pro) is not edited by ProRS. This Pelobacter propionicus (strain DSM 2379 / NBRC 103807 / OttBd1) protein is Proline--tRNA ligase.